The following is a 296-amino-acid chain: Putative fatty acid elongase DDB_G0272012 (296 aa).

Transmembrane regions (helical) follow at residues F51–L71, V83–L103, W134–L154, L159–Y179, L184–F204, M220–I240, and A253–V273. Low complexity predominate over residues S277 to T290. Residues S277–D296 are disordered.

It belongs to the ELO family.

Its subcellular location is the membrane. It catalyses the reaction a very-long-chain acyl-CoA + malonyl-CoA + H(+) = a very-long-chain 3-oxoacyl-CoA + CO2 + CoA. Functionally, could be implicated in synthesis of very long chain fatty acids. This is Putative fatty acid elongase DDB_G0272012 from Dictyostelium discoideum (Social amoeba).